Here is a 398-residue protein sequence, read N- to C-terminus: Lymphocyte transmembrane adapter 1 (398 aa).

The Extracellular portion of the chain corresponds to 1-37 (MDGVTPTLSTIRGRTLESSTLHVTPRSLDRNKDQITN). A helical; Signal-anchor for type III membrane protein transmembrane segment spans residues 38-58 (IFSGFAGLLAILLVVAVFCIL). At 59 to 398 (WNWNKRKKRQ…GPGTQLLPDE (340 aa)) the chain is on the cytoplasmic side. Tyr-193 is subject to Phosphotyrosine. Residues 228–261 (TEERDEGCGDAGDCTSLYSPGAEDSDSLSNGEGS) are disordered. A phosphotyrosine mark is found at Tyr-268 and Tyr-294. The tract at residues 298 to 330 (PAADPSGSQQQAEKDVPSSNIGHVEDKTDDPGT) is disordered. Over residues 303-318 (SGSQQQAEKDVPSSNI) the composition is skewed to polar residues. Positions 320-329 (HVEDKTDDPG) are enriched in basic and acidic residues. Residues Tyr-345 and Tyr-373 each carry the phosphotyrosine modification. A disordered region spans residues 347–398 (DFQPFTQSEDSQMKHREEMSNEDSSDYENVLTAKLGGRDSEQGPGTQLLPDE).

When phosphorylated, interacts with GRB2, PIK3R1 and GRAP2. In terms of processing, phosphorylated on tyrosines by Syk, Lck or ZAP70 upon TCR or BCR activation; which leads to the recruitment of GRB2, PIK3R1 and GRAP2. Expressed in spleen, thymus, and peripheral blood leukocytes. Expressed in several B-, T-, NK and monocyte cell lines.

It is found in the cell membrane. Functionally, negatively regulates TCR (T-cell antigen receptor)-mediated signaling in T-cells and BCR (B-cell antigen receptor)-mediated signaling in B-cells. The protein is Lymphocyte transmembrane adapter 1 (LAX1) of Homo sapiens (Human).